Consider the following 257-residue polypeptide: Small ribosomal subunit protein uS2 (257 aa).

The protein belongs to the universal ribosomal protein uS2 family.

This is Small ribosomal subunit protein uS2 from Bartonella quintana (strain Toulouse) (Rochalimaea quintana).